Consider the following 210-residue polypeptide: Na(+)-translocating NADH-quinone reductase subunit D (210 aa).

Helical transmembrane passes span 42 to 62 (FVMT…VSLI), 72 to 92 (IIVQ…ILKA), 103 to 123 (VFVG…AFAM), 131 to 151 (LIDG…VGFF), and 178 to 198 (NGLM…IWAI).

Belongs to the NqrDE/RnfAE family. As to quaternary structure, composed of six subunits; NqrA, NqrB, NqrC, NqrD, NqrE and NqrF.

Its subcellular location is the cell inner membrane. It carries out the reaction a ubiquinone + n Na(+)(in) + NADH + H(+) = a ubiquinol + n Na(+)(out) + NAD(+). Functionally, NQR complex catalyzes the reduction of ubiquinone-1 to ubiquinol by two successive reactions, coupled with the transport of Na(+) ions from the cytoplasm to the periplasm. NqrA to NqrE are probably involved in the second step, the conversion of ubisemiquinone to ubiquinol. The polypeptide is Na(+)-translocating NADH-quinone reductase subunit D (Vibrio vulnificus (strain CMCP6)).